The following is a 448-amino-acid chain: Trigger factor (448 aa).

The region spanning 172–257 is the PPIase FKBP-type domain; sequence GDRVTVDFVG…MKKIEWPHMP (86 aa).

Belongs to the FKBP-type PPIase family. Tig subfamily.

Its subcellular location is the cytoplasm. The catalysed reaction is [protein]-peptidylproline (omega=180) = [protein]-peptidylproline (omega=0). Functionally, involved in protein export. Acts as a chaperone by maintaining the newly synthesized protein in an open conformation. Functions as a peptidyl-prolyl cis-trans isomerase. The polypeptide is Trigger factor (Burkholderia vietnamiensis (strain G4 / LMG 22486) (Burkholderia cepacia (strain R1808))).